Here is a 127-residue protein sequence, read N- to C-terminus: Large ribosomal subunit protein eL22x (127 aa).

Belongs to the eukaryotic ribosomal protein eL22 family.

In Arabidopsis thaliana (Mouse-ear cress), this protein is Large ribosomal subunit protein eL22x (RPL22A).